A 701-amino-acid chain; its full sequence is Rab-like protein 6 (701 aa).

M1 bears the N-acetylmethionine mark. The tract at residues 39 to 279 is small GTPase-like; that stretch reads GVQYNMKIVI…IFLEMMEARS (241 aa). GTP contacts are provided by residues 50-57, 100-104, and 177-179; these read GDRNTGKT, DVVDK, and YRD. The interval 279–701 is disordered; the sequence is SRGHASPLTT…LRGGGDYEAL (423 aa). Over residues 284 to 315 the composition is skewed to low complexity; sequence SPLTTSGQSPSSGSQSPVVPPSTVSTGSSSPS. Residues 316-344 are compositionally biased toward pro residues; that stretch reads TPQPVLQPPLQAPPAPPAPAEAPPLPAAP. 5 positions are modified to phosphoserine: S394, S416, S418, S461, and S462. The span at 495–506 shows a compositional bias: low complexity; that stretch reads ALGPPRDAAPRA. S552 is subject to Phosphoserine. A compositionally biased stretch (basic and acidic residues) spans 555-569; that stretch reads DAQRRAGEFPVREDL. Phosphoserine is present on S570. T573 is subject to Phosphothreonine. Residues 580–589 are compositionally biased toward pro residues; that stretch reads VQPPAPPKPL. The span at 608–626 shows a compositional bias: basic and acidic residues; sequence EPGREDSSEQDKEGRPPAK. Phosphoserine is present on residues S614 and S615. The interval 629–667 is interaction with CDKN2A; that stretch reads KKKKKKGREEEDKAAKKRSKHKKSRERADDKGRDERRRR. The segment covering 643–653 has biased composition (basic residues); that stretch reads AKKRSKHKKSR. Over residues 654–665 the composition is skewed to basic and acidic residues; sequence ERADDKGRDERR. The segment covering 683 to 701 has biased composition (gly residues); it reads LGGGAPSGPLRGGGDYEAL.

This sequence belongs to the small GTPase superfamily. Rab family.

It is found in the nucleus. It localises to the cytoplasm. May enhance cellular proliferation. May reduce growth inhibitory activity of CDKN2A. In Bos taurus (Bovine), this protein is Rab-like protein 6 (RABL6).